The primary structure comprises 358 residues: U5 small nuclear ribonucleoprotein 40 kDa protein (358 aa).

Lysine 18 is covalently cross-linked (Glycyl lysine isopeptide (Lys-Gly) (interchain with G-Cter in SUMO2)). An Asymmetric dimethylarginine modification is found at arginine 21. WD repeat units lie at residues 65 to 104 (GHEGEVYCCKFHPNGSTLASAGFDRLILLWNVYGDCDNYA), 108 to 147 (GHSGAVMELHYNTDGSMLFSASTDKTVAVWDSETGERVKR), 150 to 190 (GHTS…AVQT), 192 to 231 (QNTYQVLAVTFNDTSDQIISGGIDNDIKVWDLRQNKLTYT), 234 to 273 (GHADSVTGLSLSSEGSYLLSNAMDNTVRVWDVRPFAPKER), 284 to 323 (NFEKNLLRCSWSPDGSKIAAGSADRFVYVWDTTSRRVLYK), and 326 to 358 (GHAGSINEVAFHPDEPIILSASSDKRLYMGEIQ). Residue lysine 271 forms a Glycyl lysine isopeptide (Lys-Gly) (interchain with G-Cter in SUMO2) linkage.

Component of the pre-catalytic and catalytic spliceosome complexes. Component of the postcatalytic spliceosome P complex. Part of the U5 snRNP complex. Interacts with PRPF8. Component of the U4/U6-U5 tri-snRNP complex composed of the U4, U6 and U5 snRNAs and at least PRPF3, PRPF4, PRPF6, PRPF8, PRPF31, SNRNP200, TXNL4A, WDR57, SNRNP40, DDX23, CD2BP2, PPIH, SNU13, EFTUD2, SART1 and USP39. Component of the minor spliceosome, which splices U12-type introns.

It localises to the nucleus. In terms of biological role, required for pre-mRNA splicing as component of the activated spliceosome. Component of the U5 small nuclear ribonucleoprotein (snRNP) complex and the U4/U6-U5 tri-snRNP complex, building blocks of the spliceosome. As a component of the minor spliceosome, involved in the splicing of U12-type introns in pre-mRNAs. This chain is U5 small nuclear ribonucleoprotein 40 kDa protein (Snrnp40), found in Mus musculus (Mouse).